A 318-amino-acid chain; its full sequence is Ribosomal lysine N-methyltransferase 5 (318 aa).

Residues W95, 139-141 (GSG), D161, W214, and M241 contribute to the S-adenosyl-L-methionine site.

It belongs to the class I-like SAM-binding methyltransferase superfamily. RKM5 family.

S-adenosyl-L-methionine-dependent protein-lysine N-methyltransferase that methylates 60S ribosomal protein L1. This is Ribosomal lysine N-methyltransferase 5 (RKM5) from Zygosaccharomyces rouxii (strain ATCC 2623 / CBS 732 / NBRC 1130 / NCYC 568 / NRRL Y-229).